We begin with the raw amino-acid sequence, 1049 residues long: Isoleucine--tRNA ligase (1049 aa).

The 'HIGH' region motif lies at 48 to 59 (PYPSSPTPHIGT). Residues 597-601 (EMHKS) carry the 'KMSKS' region motif. Residue Lys600 coordinates ATP.

The protein belongs to the class-I aminoacyl-tRNA synthetase family. IleS type 2 subfamily. As to quaternary structure, monomer. The cofactor is Zn(2+).

The protein localises to the cytoplasm. It catalyses the reaction tRNA(Ile) + L-isoleucine + ATP = L-isoleucyl-tRNA(Ile) + AMP + diphosphate. Catalyzes the attachment of isoleucine to tRNA(Ile). As IleRS can inadvertently accommodate and process structurally similar amino acids such as valine, to avoid such errors it has two additional distinct tRNA(Ile)-dependent editing activities. One activity is designated as 'pretransfer' editing and involves the hydrolysis of activated Val-AMP. The other activity is designated 'posttransfer' editing and involves deacylation of mischarged Val-tRNA(Ile). In Saccharolobus islandicus (strain M.16.27) (Sulfolobus islandicus), this protein is Isoleucine--tRNA ligase.